Reading from the N-terminus, the 872-residue chain is Alanine--tRNA ligase (872 aa).

The Zn(2+) site is built by histidine 567, histidine 571, cysteine 669, and histidine 673.

It belongs to the class-II aminoacyl-tRNA synthetase family. Requires Zn(2+) as cofactor.

It is found in the cytoplasm. It catalyses the reaction tRNA(Ala) + L-alanine + ATP = L-alanyl-tRNA(Ala) + AMP + diphosphate. In terms of biological role, catalyzes the attachment of alanine to tRNA(Ala) in a two-step reaction: alanine is first activated by ATP to form Ala-AMP and then transferred to the acceptor end of tRNA(Ala). Also edits incorrectly charged Ser-tRNA(Ala) and Gly-tRNA(Ala) via its editing domain. This Streptococcus pneumoniae serotype 4 (strain ATCC BAA-334 / TIGR4) protein is Alanine--tRNA ligase.